The primary structure comprises 177 residues: Translation initiation factor IF-3 (177 aa).

This sequence belongs to the IF-3 family. Monomer.

It localises to the cytoplasm. Its function is as follows. IF-3 binds to the 30S ribosomal subunit and shifts the equilibrium between 70S ribosomes and their 50S and 30S subunits in favor of the free subunits, thus enhancing the availability of 30S subunits on which protein synthesis initiation begins. This is Translation initiation factor IF-3 from Clostridium perfringens (strain 13 / Type A).